The following is a 372-amino-acid chain: Mevalonate 3,5-bisphosphate decarboxylase (372 aa).

It belongs to the mevalonate 3,5-bisphosphate decarboxylase family. In terms of assembly, homodimer.

The catalysed reaction is (R)-3,5-bisphosphomevalonate + H(+) = isopentenyl phosphate + phosphate + CO2. It participates in isoprenoid biosynthesis; isopentenyl diphosphate biosynthesis via mevalonate pathway. In terms of biological role, catalyzes the ATP-independent decarboxylation of (R)-mevalonate 3,5-bisphosphate to isopentenyl phosphate. Functions in an alternative mevalonate pathway, only present in extreme acidophiles of the Thermoplasmatales order, which passes through mevalonate 3-phosphate rather than mevalonate 5-phosphate. This Thermoplasma volcanium (strain ATCC 51530 / DSM 4299 / JCM 9571 / NBRC 15438 / GSS1) protein is Mevalonate 3,5-bisphosphate decarboxylase.